Consider the following 415-residue polypeptide: Tyrosine--tRNA ligase (415 aa).

A 'HIGH' region motif is present at residues 54–63; the sequence is PTGSNIHLGH. The 'KMSKS' region signature appears at 248 to 252; sequence KMSKT. Lysine 251 is an ATP binding site. One can recognise an S4 RNA-binding domain in the interval 351–415; sequence AKAFYLMSAV…GKKTFRRLTA (65 aa).

This sequence belongs to the class-I aminoacyl-tRNA synthetase family. TyrS type 2 subfamily. In terms of assembly, homodimer.

It is found in the cytoplasm. The enzyme catalyses tRNA(Tyr) + L-tyrosine + ATP = L-tyrosyl-tRNA(Tyr) + AMP + diphosphate + H(+). Catalyzes the attachment of tyrosine to tRNA(Tyr) in a two-step reaction: tyrosine is first activated by ATP to form Tyr-AMP and then transferred to the acceptor end of tRNA(Tyr). This chain is Tyrosine--tRNA ligase, found in Synechococcus sp. (strain CC9902).